The primary structure comprises 420 residues: Transcription factor IIIB 50 kDa subunit (420 aa).

The TFIIB-type zinc-finger motif lies at 3–36; that stretch reads NGSRCPDCGSSELVEDSHYSQSQLVCSDCGCVVT. The Zn(2+) site is built by Cys7, Cys10, Cys28, and Cys31. 2 consecutive repeat copies span residues 72 to 157 and 173 to 249. The interval 108–114 is interaction with target DNA; that stretch reads AARLQKK. The tract at residues 316 to 387 is disordered; sequence TAEVETQQQQ…AVTGDEDISD (72 aa). The span at 322 to 336 shows a compositional bias: low complexity; that stretch reads QQQQQQQQGQGQGQQ. Phosphoserine is present on Ser354. Residues 358–364 form a required for the formation of a ternary complex with DNA and TBP; not required for interaction with TBP in the absence of DNA region; it reads LLPPCML. Cys362 carries the post-translational modification Cysteine sulfenic acid (-SOH). Residues 366 to 420 are required for interaction with TBP and formation of a ternary complex with DNA and TBP; that stretch reads PPKRTHTLPPESAVTGDEDISDSEIEQYLRTPQEVRDFERAQAASQAAMRVPNPP.

The protein belongs to the TFIIB family. As to quaternary structure, component of TFIIIB complexes. The TFIIIB complex has two activities, alpha and beta. The TFIIIB-alpha activity complex is composed of TBP, BDP1, and a complex containing both BRF2 and at least four stably associated proteins; this complex inhibits the transcription by pol III via its phosphorylation by CK2; YY1 facilitates the TFIIIB-alpha complex formation. Interacts with TBP; this interaction promotes recruitment of BRF2 to TATA box-containing promoters. Interacts with TBP and the BURE sequence (GC-rich sequence downstream from the TATA box) to form a strong ternary complex which is joined by BDP1; this ternary complex stimulates pol III transcription. Forms a trimeric complex composed of TBP, BRF2 and mini-SNAPc complex (SNAP43, SNAP50, and the N-terminal third of SNAP190) on the promoter. Assembly of the TBP-BRF2 complex is stimulated by SNAP190. Interacts with MAF1 and SNAPC4. In response to oxidative stress, Cys-362 is reversibly oxidized to cysteine sulfenic acid. Oxidation of Cys-362 impairs formation of a ternary complex with TBP and DNA and down-regulates expression of target genes in response to oxidative stress.

The protein resides in the nucleus. In terms of biological role, general activator of RNA polymerase III transcription. Factor exclusively required for RNA polymerase III transcription of genes with promoter elements upstream of the initiation sites. Contributes to the regulation of gene expression; functions as activator in the absence of oxidative stress. Down-regulates expression of target genes in response to oxidative stress. Overexpression protects cells against apoptosis in response to oxidative stress. The sequence is that of Transcription factor IIIB 50 kDa subunit (Brf2) from Mus musculus (Mouse).